Consider the following 475-residue polypeptide: Neuronal acetylcholine receptor subunit alpha-5 (475 aa).

An N-terminal signal peptide occupies residues 1 to 29 (MAAPGWGRWVLGLGPLLLQVFLPFQLVAG). Residues 30–261 (RWGPEGAGGG…VIKRLPLFYT (232 aa)) are Extracellular-facing. Cys-177 and Cys-191 form a disulfide bridge. Asn-190 and Asn-236 each carry an N-linked (GlcNAc...) asparagine glycan. A disulfide bridge connects residues Cys-241 and Cys-242. A run of 3 helical transmembrane segments spans residues 262-282 (LFLI…FYLP), 289-309 (ICLC…IEEI), and 324-344 (LVFT…AINI). Over 345–437 (HHRSSSTHDA…KFIAQVLDRM (93 aa)) the chain is Cytoplasmic. The chain crosses the membrane as a helical span at residues 438-458 (FLWTFLLVSVVGSLGLFVPVI). Over 459-475 (YKWANIIVPIHIGNENK) the chain is Extracellular.

Belongs to the ligand-gated ion channel (TC 1.A.9) family. Acetylcholine receptor (TC 1.A.9.1) subfamily. Alpha-5/CHRNA5 sub-subfamily. Neuronal AChR that forms heteropentamers composed of two different type of subunits: alpha and non-alpha (beta). CHRNA5/alpha-5 subunit is only able to form functional nAChRs when co-assembled with another alpha subunit, can be combined to CHRNA4/alpha-4 or CHRNA3/alpha-3 and CHRNB4/beta-4 or CHRNB2/beta-2 to give rise to functional receptors. Interacts with LYPD6.

Its subcellular location is the synaptic cell membrane. The protein localises to the cell membrane. The enzyme catalyses Ca(2+)(in) = Ca(2+)(out). The catalysed reaction is K(+)(in) = K(+)(out). It carries out the reaction Na(+)(in) = Na(+)(out). Activated by a myriad of ligands such as acetylcholine, cytisine, nicotine, choline and epibatidine. Component of neuronal acetylcholine receptors (nAChRs) that function as pentameric, ligand-gated cation channels with high calcium permeability among other activities. nAChRs are excitatory neurotrasnmitter receptors formed by a collection of nAChR subunits known to mediate synaptic transmission in the nervous system and the neuromuscular junction. Each nAchR subunit confers differential attributes to channel properties, including activation, deactivation and desensitization kinetics, pH sensitivity, cation permeability, and binding to allosteric modulators. Has an accessory rather than functional role and is only able to form functional nAChRs when co-assembled with another beta subunit. Participates in pentameric assemblies along with CHRNA3, CHRNA4, CHRNB2 and CHRNB4. Increases receptor sensitivity to acetylcholine and nicotine when associated with CHRNA4 and CHRNB2. Plays a role in nicotine addiction. This chain is Neuronal acetylcholine receptor subunit alpha-5 (CHRNA5), found in Bos taurus (Bovine).